Consider the following 386-residue polypeptide: Circumsporozoite protein (386 aa).

The signal sequence occupies residues 1 to 22 (MKNFILLAVSSILLVDLFPTHC). The segment at 51–304 (HVGQSASRGR…NEGANAPNEK (254 aa)) is disordered. Over residues 72–100 (DAKKKKDGKKAEPKNPRENKLKQPGDRAD) the composition is skewed to basic and acidic residues. Residues 80–88 (KKAEPKNPR) form a required for the binding to heparan sulfate proteoglycans (HSPGs) on the surface of host hepatocytes region. Residues 91–95 (KLKQP) form a region I; contains the proteolytic cleavage site region. Repeat copies occupy residues 96–104 (GDRADGQPA), 105–113 (GDRADGQPA), 114–122 (GDRADGQPA), 123–131 (GDRADGQPA), 132–140 (GDRADGQPA), 141–149 (GDRAAGQPA), 150–158 (GDRADGQPA), 159–167 (GDRADGQPA), 168–176 (GDRAAGQPA), 177–185 (GDRAAGQPA), 186–194 (GDRADGQPA), 195–203 (GDRADGQPA), 204–212 (GDRADGQPA), 213–221 (GDRAAGQPA), 222–230 (GDRAAGQPA), 231–239 (GDRAAGQPA), 240–248 (GDRAAGQPA), 249–257 (GDRAAGQPA), 258–266 (GDRAAGQPA), and 267–275 (GDRAAGQPA). The tract at residues 96–275 (GDRADGQPAG…AGDRAAGQPA (180 aa)) is 20 X 9 AA tandem repeats of G-D-R-A-[AD]-G-Q-P-A. Residues 275-292 (AGNGAGGQAAGGNAGGQG) show a composition bias toward gly residues. Residues 293–303 (QNNEGANAPNE) show a composition bias toward low complexity. The TSP type-1 domain occupies 312-364 (KVRATVGTEWTPCSVTCGVGVRVRRRVNAANKKPEDLTLNDLETDVCTMDKCA). Intrachain disulfides connect Cys324-Cys358 and Cys328-Cys363. An O-linked (Fuc) threonine glycan is attached at Thr327. Cys363 is lipidated: GPI-anchor amidated cysteine. Residues 364-386 (AGIFNVVSNSLGLVILLVLALFN) constitute a propeptide, removed in mature form.

The protein belongs to the plasmodium circumsporozoite protein family. In terms of processing, during host cell invasion, proteolytically cleaved at the cell membrane in the region I by a papain-like cysteine protease of parasite origin. Cleavage is triggered by the sporozoite contact with highly sulfated heparan sulfate proteoglycans (HSPGs) present on the host hepatocyte cell surface. Cleavage exposes the TSP type-1 (TSR) domain and is required for productive invasion of host hepatocytes but not for adhesion to the host cell membrane. Cleavage is dispensable for sporozoite development in the oocyst, motility and for traversal of host and vector cells. Post-translationally, O-glycosylated; maybe by POFUT2.

The protein localises to the cell membrane. The protein resides in the cytoplasm. Functionally, essential sporozoite protein. In the mosquito vector, required for sporozoite development in the oocyst, migration through the vector hemolymph and entry into the vector salivary glands. In the vertebrate host, required for sporozoite migration through the host dermis and infection of host hepatocytes. Binds to highly sulfated heparan sulfate proteoglycans (HSPGs) on the surface of host hepatocytes. In the vertebrate host, binds to highly sulfated heparan sulfate proteoglycans (HSPGs) on the surface of host hepatocytes and is required for sporozoite invasion of the host hepatocytes. The chain is Circumsporozoite protein from Plasmodium simium.